Reading from the N-terminus, the 292-residue chain is Hypoxia responsive morphology factor A (292 aa).

The short motif at 48 to 70 (RRNGRRRNLEYVAQHRRKIARKI) is the Bipartite nuclear localization signal element. Residues 156–186 (GKEHYSLHLSTLPAIRNAFGDVIFDAIERSP) are RNA recognition motif (RRM)-like domain.

The protein belongs to the hrmA family.

Its subcellular location is the nucleus. Its function is as follows. Hypoxia responsive morphology factor that modulates the expression of the subtelomeric hrmA-associated cluster (HAC) containing genes that alter the hyphal surface (such as reduced total chitin or increased beta-glucan exposure) and perturb inter-hyphal interactions within the developing biofilms, resulting in a loss of vertically aligned polarized growing filaments. Consequently, this hypoxia-typic morphotype (called H-MORPH) with altered biofilm architecture leads to increased hypoxia fitness, increased host inflammation, rapid disease progression, and mortality in a murine model of invasive aspergillosis. The protein is Hypoxia responsive morphology factor A of Aspergillus fumigatus (strain CBS 144.89 / FGSC A1163 / CEA10) (Neosartorya fumigata).